A 1550-amino-acid polypeptide reads, in one-letter code: DNA excision repair protein ERCC-6-like 2 (1550 aa).

The disordered stretch occupies residues 1-23 (MDPSAPQPRAETSGKDIWHPGER). Residues 12–22 (TSGKDIWHPGE) show a composition bias toward basic and acidic residues. A Helicase ATP-binding domain is found at 135–321 (YGHYIHGGGC…WCVMDWAVPG (187 aa)). Residue 148 to 155 (DDMGLGKT) participates in ATP binding. The DEAH box signature appears at 272–275 (DEAH). The Helicase C-terminal domain maps to 512 to 662 (VLQQLLNHCR…CVVVGSENAK (151 aa)). The Atypical PIP-box signature appears at 785-796 (PGQLTLLQCGFS). 3 disordered regions span residues 808–848 (DSDG…TSKH), 914–1002 (FPDN…SSLR), and 1354–1410 (AETK…TRTG). Basic and acidic residues-rich tracts occupy residues 830-840 (EAKDAGCEKNQ) and 933-953 (TEHT…DKRN). Phosphoserine is present on residues Ser980 and Ser983. Positions 992-1002 (SRVRKRASSLR) are enriched in basic residues. Positions 1359–1388 (SPVSSTQEIDSGKNSQASEDTVTSRSLNSE) are enriched in polar residues. Ser1373 and Ser1376 each carry phosphoserine. A compositionally biased stretch (basic and acidic residues) spans 1389 to 1405 (SETRERRLENTMKDQQD).

This sequence belongs to the SNF2/RAD54 helicase family. As to quaternary structure, interacts with NEK6. Interacts (via an atypical PIP-box) with PCNA; this interaction facilitates cenrtomeric localization of ERCC6L2. Interacts with CYREN; this interaction is DNA independent. Interacts with XRCC6 and XRCC5. Post-translationally, phosphorylated by NEK6. Expressed in bone marrow (at protein level).

The protein resides in the nucleus. It is found in the cytoplasm. It localises to the cytoskeleton. Its subcellular location is the microtubule organizing center. The protein localises to the centrosome. The protein resides in the mitochondrion. It is found in the chromosome. It localises to the centromere. Its function is as follows. Promotes double-strand break (DSB) end-joining and facilitates programmed recombination by controlling how DNA ends are joined in a spatially oriented manner during repair. Also plays a role in DNA repair by restricting DNA end resection in double strand break (DSB) repair. Facilitates replication of complex DNA regions and regulates the maintenance of chromatin structure. This is DNA excision repair protein ERCC-6-like 2 from Homo sapiens (Human).